Reading from the N-terminus, the 310-residue chain is Porphobilinogen deaminase (310 aa).

Cysteine 242 bears the S-(dipyrrolylmethanemethyl)cysteine mark.

It belongs to the HMBS family. As to quaternary structure, monomer. Dipyrromethane serves as cofactor.

It carries out the reaction 4 porphobilinogen + H2O = hydroxymethylbilane + 4 NH4(+). It functions in the pathway porphyrin-containing compound metabolism; protoporphyrin-IX biosynthesis; coproporphyrinogen-III from 5-aminolevulinate: step 2/4. Functionally, tetrapolymerization of the monopyrrole PBG into the hydroxymethylbilane pre-uroporphyrinogen in several discrete steps. The protein is Porphobilinogen deaminase of Shewanella oneidensis (strain ATCC 700550 / JCM 31522 / CIP 106686 / LMG 19005 / NCIMB 14063 / MR-1).